The sequence spans 311 residues: Protoheme IX farnesyltransferase (311 aa).

9 consecutive transmembrane segments (helical) span residues 32–52 (VMSL…VPIN), 53–73 (PWYG…AGAL), 104–124 (FIFG…FINW), 125–145 (FAAF…TIWL), 153–173 (IVIG…VTTG), 180–200 (FLLF…LSLF), 224–244 (KQIL…CFTG), 245–265 (LGGV…IYFA), and 285–305 (FFFS…ESLV).

It belongs to the UbiA prenyltransferase family. Protoheme IX farnesyltransferase subfamily.

The protein resides in the cell inner membrane. The enzyme catalyses heme b + (2E,6E)-farnesyl diphosphate + H2O = Fe(II)-heme o + diphosphate. The protein operates within porphyrin-containing compound metabolism; heme O biosynthesis; heme O from protoheme: step 1/1. Its function is as follows. Converts heme B (protoheme IX) to heme O by substitution of the vinyl group on carbon 2 of heme B porphyrin ring with a hydroxyethyl farnesyl side group. The polypeptide is Protoheme IX farnesyltransferase (Bartonella tribocorum (strain CIP 105476 / IBS 506)).